We begin with the raw amino-acid sequence, 296 residues long: Aquaporin PIP1-6 (296 aa).

The next 2 membrane-spanning stretches (helical) occupy residues 63–83 (IAEF…VMGV) and 98–120 (IAWA…SGGH). Positions 122-124 (NPA) match the NPA 1 motif. 3 consecutive transmembrane segments (helical) span residues 141 to 161 (VYYV…VKAF), 183 to 203 (GDGL…VFSA), and 217 to 237 (ALAP…TIPI). The NPA 2 signature appears at 243–245 (NPA). Residues 265–285 (IFWVGPFAGAALAAVYHQVVL) traverse the membrane as a helical segment.

It belongs to the MIP/aquaporin (TC 1.A.8) family. PIP (TC 1.A.8.11) subfamily.

Its subcellular location is the cell membrane. Functionally, aquaporins facilitate the transport of water and small neutral solutes across cell membranes. In Zea mays (Maize), this protein is Aquaporin PIP1-6 (PIP1-6).